Here is a 154-residue protein sequence, read N- to C-terminus: ORF3b protein (154 aa).

Residues Leu80–Lys138 are mitochondrial targeting signal. The interval Cys134–Arg154 is nucleolar targeting. A Bipartite nuclear localization signal motif is present at residues Lys135–Val153.

As to quaternary structure, interacts with host RUNX1 isoform b.

It is found in the host nucleus. Its subcellular location is the host nucleolus. It localises to the host mitochondrion. Its function is as follows. Induces host cell G0/G1 arrest and apoptosis. The protein is ORF3b protein of Homo sapiens (Human).